We begin with the raw amino-acid sequence, 311 residues long: Aspartate carbamoyltransferase catalytic subunit (311 aa).

Carbamoyl phosphate-binding residues include Arg-58 and Thr-59. Residue Lys-86 coordinates L-aspartate. Arg-108, His-136, and Gln-139 together coordinate carbamoyl phosphate. The L-aspartate site is built by Arg-169 and Arg-224. Carbamoyl phosphate is bound by residues Gly-265 and Pro-266.

This sequence belongs to the aspartate/ornithine carbamoyltransferase superfamily. ATCase family. As to quaternary structure, heterododecamer (2C3:3R2) of six catalytic PyrB chains organized as two trimers (C3), and six regulatory PyrI chains organized as three dimers (R2).

It catalyses the reaction carbamoyl phosphate + L-aspartate = N-carbamoyl-L-aspartate + phosphate + H(+). It participates in pyrimidine metabolism; UMP biosynthesis via de novo pathway; (S)-dihydroorotate from bicarbonate: step 2/3. Its function is as follows. Catalyzes the condensation of carbamoyl phosphate and aspartate to form carbamoyl aspartate and inorganic phosphate, the committed step in the de novo pyrimidine nucleotide biosynthesis pathway. This chain is Aspartate carbamoyltransferase catalytic subunit, found in Geotalea uraniireducens (strain Rf4) (Geobacter uraniireducens).